The chain runs to 1525 residues: Dicer-like protein 1 (1525 aa).

The span at 37 to 52 shows a compositional bias: acidic residues; that stretch reads DLQEDDGSSDESDNDE. Residues 37–65 form a disordered region; the sequence is DLQEDDGSSDESDNDEREDHSKTGVSQQR. The 182-residue stretch at 124–305 folds into the Helicase ATP-binding domain; sequence LFERAKVQNT…DEATRLEKLL (182 aa). 137 to 144 lines the ATP pocket; the sequence is LDTGSGKT. The DEAH box signature appears at 250–253; the sequence is DEAH. A Helicase C-terminal domain is found at 439-605; sequence QLSPKVQVLR…SFCRTLPEDR (167 aa). The region spanning 641-731 is the Dicer dsRNA-binding fold domain; that stretch reads ATAILARYAS…NSIYHRRLPA (91 aa). Residues 881–1009 form the PAZ domain; sequence ESLTYVRDND…ICIEPLKVSA (129 aa). RNase III domains are found at residues 1032-1192 and 1243-1394; these read LISL…LSGG and SRKI…VDSD. Mg(2+) contacts are provided by Glu-1283, Asp-1380, and Glu-1383. The region spanning 1428-1496 is the DRBM domain; it reads TFLHNRLTNE…SEKALAVLDE (69 aa). Positions 1440, 1467, 1508, and 1510 each coordinate Zn(2+).

This sequence belongs to the helicase family. Dicer subfamily. Mg(2+) serves as cofactor. The cofactor is Mn(2+).

Its function is as follows. Dicer-like endonuclease involved in cleaving double-stranded RNA in the RNA interference (RNAi) pathway. Produces 21 to 25 bp dsRNAs (siRNAs) which target the selective destruction of homologous RNAs leading to sequence-specific suppression of gene expression, called post-transcriptional gene silencing (PTGS). Part of a broad host defense response against viral infection and transposons. In Aspergillus niger (strain ATCC MYA-4892 / CBS 513.88 / FGSC A1513), this protein is Dicer-like protein 1 (dcl1).